A 226-amino-acid polypeptide reads, in one-letter code: 2,3-bisphosphoglycerate-dependent phosphoglycerate mutase (226 aa).

Substrate contacts are provided by residues 8-15 (RHGQSVWN), 21-22 (TG), arginine 58, 109-112 (ERMY), lysine 120, 136-137 (RR), and 180-181 (GN). The active-site Tele-phosphohistidine intermediate is histidine 9. Glutamate 109 functions as the Proton donor/acceptor in the catalytic mechanism.

Belongs to the phosphoglycerate mutase family. BPG-dependent PGAM subfamily.

It carries out the reaction (2R)-2-phosphoglycerate = (2R)-3-phosphoglycerate. Its pathway is carbohydrate degradation; glycolysis; pyruvate from D-glyceraldehyde 3-phosphate: step 3/5. Its function is as follows. Catalyzes the interconversion of 2-phosphoglycerate and 3-phosphoglycerate. The protein is 2,3-bisphosphoglycerate-dependent phosphoglycerate mutase of Chlamydia trachomatis serovar L2 (strain ATCC VR-902B / DSM 19102 / 434/Bu).